The sequence spans 550 residues: MEDLKKSVTNIVHSMYNFDCSEIVSLTRPPKPEYGDWALSLPLKLASLLKSPAIDIAQSIASALLELDGVQDVYVAKPGFINLKLSREHTTGIISEVLEQGSSFGRNTTQSSKKINLEFVSGNPTGPLHLAHTRWAAVGDSIARILINCGADVTREYYINNVGNQIHLFSESVYARALSKSLPKDGYPGEYVKDIARRIQCEFPNIIDLSYEDAIKIFRKRSWQIQIEEIKKSCIAFRVNFDVWFSEESLHEPDRFGKSQIDKALARCKQNGYLFQKNGAFFIRTTEFGDDKDRAVLRSDTSYTYYAADCAYYLNKINRGFSDLVILVGADHHGYVKRFQAMSNIFHVDSENNRKNVQVLLGQMVSLKNKRQSKREGNVIGLSEIIQSVGVDPLRFWFCRYPIDTPIDLDEQHLKKRSNDNPVYYVQYAYARTRSLIRSANLLQMEKFGFFPELLVHETETALVSLLYDYKTVVIDAARFLQPHRVVRYLESLAGAYHKWYDKCRIIPRKGILDKSEAELVNTRLELNRAVGQVLYNALDLIGVSAPERM.

Residues 122 to 132 (GNPTGPLHLAH) carry the 'HIGH' region motif.

It belongs to the class-I aminoacyl-tRNA synthetase family. Monomer.

Its subcellular location is the cytoplasm. It carries out the reaction tRNA(Arg) + L-arginine + ATP = L-arginyl-tRNA(Arg) + AMP + diphosphate. This Tropheryma whipplei (strain TW08/27) (Whipple's bacillus) protein is Arginine--tRNA ligase.